A 515-amino-acid chain; its full sequence is MRAVWALLWALQLGTLVGCALVLGVHHFSGDNLTKQSAIPTKSSKAKPISDQKAAVTSGSTCAVREKARKDGLVLLDGNWYNVEKFVHHHPGGVEVLEQYLGADISFVFRVMHRNPTQIMKYRKPVRAATPEELEALTSRRQEVCLDMMDDFVTNSIDIASPEMLPKPTQFDLKSFEKDFIDLYEEFVAQGYFKPSTTWLLWNTAVLISIIALSVISMKVLPPTSFVLPGALLGLFWHQSGFLMHDAEHHNLAGNERLNDILGWIYGTVFLGVNGAWWREEHREHHAFLNTYDDESGFKDPQMREDVWIQNKKLIPFFGDEIIHFLTNFQHILFLPIIFIVGRVGIVVDSTLTERKFRPWTILGNVCHILLHYAILSQTSRPIPVYIIGSLWQAILSLQLLGNHYVKPWNRLNDATEGNFCVWQILSTQDFACPRWSRWLYGGLNFHYSHHLFPTLSREYFHITSPRIRTLCEKHGLPFIEIAFIDCVVGMVNNFNEVRKDFATKGHGSVAFMYT.

A helical transmembrane segment spans residues 3–23 (AVWALLWALQLGTLVGCALVL). The Cytochrome b5 heme-binding domain maps to 46-113 (AKPISDQKAA…DISFVFRVMH (68 aa)). Heme-binding residues include His90 and His113. The chain crosses the membrane as a helical span at residues 198-218 (TWLLWNTAVLISIIALSVISM). A Histidine box-1 motif is present at residues 245 to 249 (HDAEH). Residues 258–278 (LNDILGWIYGTVFLGVNGAWW) traverse the membrane as a helical segment. The Histidine box-2 motif lies at 281–286 (EHREHH). 3 helical membrane-spanning segments follow: residues 322 to 342 (IIHFLTNFQHILFLPIIFIVG), 359 to 379 (PWTILGNVCHILLHYAILSQT), and 382 to 402 (PIPVYIIGSLWQAILSLQLLG). Positions 447-451 (HYSHH) match the Histidine box-3 motif.

Belongs to the fatty acid desaturase type 1 family. Requires Fe(2+) as cofactor.

Its subcellular location is the membrane. The catalysed reaction is a (4E,8E)-4-sphinga-4,8-dienine ceramide + 2 Fe(II)-[cytochrome b5] + O2 + 2 H(+) = an N-acyl-(4E,8E,10E)-sphingatrienine + 2 Fe(III)-[cytochrome b5] + 2 H2O. The protein operates within lipid metabolism; sphingolipid metabolism. Its function is as follows. Fatty acid desaturase that catalyzes the introduction of the third double bond at the Delta(10) position in d18:3Delta4,8,10 triunsaturated sphingolipid long fatty acid chains. The cytochrome b5 domain probably acts as the direct electron donor to the active site of the desaturase. The protein is Sphingolipid 10-desaturase of Thalassiosira pseudonana (Marine diatom).